A 265-amino-acid polypeptide reads, in one-letter code: 1-(5-phosphoribosyl)-5-[(5-phosphoribosylamino)methylideneamino] imidazole-4-carboxamide isomerase (265 aa).

Catalysis depends on aspartate 8, which acts as the Proton acceptor. Residue aspartate 139 is the Proton donor of the active site.

This sequence belongs to the HisA/HisF family.

It is found in the cytoplasm. It catalyses the reaction 1-(5-phospho-beta-D-ribosyl)-5-[(5-phospho-beta-D-ribosylamino)methylideneamino]imidazole-4-carboxamide = 5-[(5-phospho-1-deoxy-D-ribulos-1-ylimino)methylamino]-1-(5-phospho-beta-D-ribosyl)imidazole-4-carboxamide. Its pathway is amino-acid biosynthesis; L-histidine biosynthesis; L-histidine from 5-phospho-alpha-D-ribose 1-diphosphate: step 4/9. The polypeptide is 1-(5-phosphoribosyl)-5-[(5-phosphoribosylamino)methylideneamino] imidazole-4-carboxamide isomerase (Herminiimonas arsenicoxydans).